A 147-amino-acid polypeptide reads, in one-letter code: Hemoglobin subunit epsilon-2 (147 aa).

A Globin domain is found at 3–147 (HFTTEENVAV…VANALTHKYH (145 aa)). Heme b is bound by residues Tyr-64 and His-93.

It belongs to the globin family. As to expression, red blood cells.

In terms of biological role, hemoglobin epsilon chain is a beta-type chain found in early embryos. The protein is Hemoglobin subunit epsilon-2 (HBE2) of Bos taurus (Bovine).